Consider the following 225-residue polypeptide: Ribonuclease 3 (225 aa).

An RNase III domain is found at 5-127; that stretch reads MNKLTSKLGY…IIGAIYLDSD (123 aa). Glu40 serves as a coordination point for Mg(2+). Asp44 is a catalytic residue. Residues Asp113 and Glu116 each coordinate Mg(2+). Residue Glu116 is part of the active site. Residues 154 to 224 enclose the DRBM domain; sequence DPKTRLQEFL…AETALEQLTN (71 aa).

The protein belongs to the ribonuclease III family. Homodimer. The cofactor is Mg(2+).

It is found in the cytoplasm. The catalysed reaction is Endonucleolytic cleavage to 5'-phosphomonoester.. In terms of biological role, digests double-stranded RNA. Involved in the processing of primary rRNA transcript to yield the immediate precursors to the large and small rRNAs (23S and 16S). Processes some mRNAs, and tRNAs when they are encoded in the rRNA operon. Processes pre-crRNA and tracrRNA of type II CRISPR loci if present in the organism. The protein is Ribonuclease 3 of Vibrio cholerae serotype O1 (strain ATCC 39315 / El Tor Inaba N16961).